The sequence spans 486 residues: Glutamate--tRNA ligase 1 (486 aa).

The 'HIGH' region motif lies at 9–19; it reads PSPTGMLHIGG. A 'KMSKS' region motif is present at residues 259-263; the sequence is KLSKR. Lys262 provides a ligand contact to ATP.

This sequence belongs to the class-I aminoacyl-tRNA synthetase family. Glutamate--tRNA ligase type 1 subfamily. As to quaternary structure, monomer.

The protein localises to the cytoplasm. It carries out the reaction tRNA(Glu) + L-glutamate + ATP = L-glutamyl-tRNA(Glu) + AMP + diphosphate. Functionally, catalyzes the attachment of glutamate to tRNA(Glu) in a two-step reaction: glutamate is first activated by ATP to form Glu-AMP and then transferred to the acceptor end of tRNA(Glu). The polypeptide is Glutamate--tRNA ligase 1 (Hyphomonas neptunium (strain ATCC 15444)).